Consider the following 288-residue polypeptide: Plasmodesmata-located protein 6 (288 aa).

A signal peptide spans 1 to 22 (MFATKTVLFIAVVSLLGTFSSA). The Extracellular segment spans residues 23–256 (AVDTFIYGGC…NNDDDEIEKT (234 aa)). Gnk2-homologous domains lie at 25 to 132 (DTFI…NTTF) and 137 to 234 (DKTV…ARGG). 6 disulfide bridges follow: C32/C110, C84/C95, C98/C123, C145/C212, C188/C197, and C200/C225. The chain crosses the membrane as a helical span at residues 257–277 (LAIIVGLIAGVTLLVVFLSFM). The tract at residues 257–277 (LAIIVGLIAGVTLLVVFLSFM) is necessary and sufficient for plasmodesmal targeting. Residues 278-288 (AKSCERGKGGK) lie on the Cytoplasmic side of the membrane.

It belongs to the cysteine-rich repeat secretory protein family. Plasmodesmata-located proteins (PDLD) subfamily. As to quaternary structure, (Microbial infection) Interacts with Grapevine fanleaf virus (GFLV) 2B-MP. In terms of tissue distribution, highly expressed in inflorescence silique (at mRNA level).

It is found in the cell membrane. It localises to the cell junction. Its subcellular location is the plasmodesma. Modulates cell-to-cell trafficking. In Arabidopsis thaliana (Mouse-ear cress), this protein is Plasmodesmata-located protein 6.